We begin with the raw amino-acid sequence, 248 residues long: Coproheme decarboxylase (248 aa).

Fe-coproporphyrin III is bound by residues Arg130, 144 to 148 (YPMDK), His171, Gln184, and Ser222. Residue Tyr144 is part of the active site.

This sequence belongs to the ChdC family. Type 1 subfamily. In terms of assembly, homopentamer. Fe-coproporphyrin III serves as cofactor.

It carries out the reaction Fe-coproporphyrin III + 2 H2O2 + 2 H(+) = heme b + 2 CO2 + 4 H2O. The enzyme catalyses Fe-coproporphyrin III + H2O2 + H(+) = harderoheme III + CO2 + 2 H2O. It catalyses the reaction harderoheme III + H2O2 + H(+) = heme b + CO2 + 2 H2O. Its pathway is porphyrin-containing compound metabolism; protoheme biosynthesis. Involved in coproporphyrin-dependent heme b biosynthesis. Catalyzes the decarboxylation of Fe-coproporphyrin III (coproheme) to heme b (protoheme IX), the last step of the pathway. The reaction occurs in a stepwise manner with a three-propionate intermediate. The polypeptide is Coproheme decarboxylase (Geobacillus kaustophilus (strain HTA426)).